A 317-amino-acid polypeptide reads, in one-letter code: Glycine--tRNA ligase alpha subunit (317 aa).

The protein belongs to the class-II aminoacyl-tRNA synthetase family. As to quaternary structure, tetramer of two alpha and two beta subunits.

Its subcellular location is the cytoplasm. The enzyme catalyses tRNA(Gly) + glycine + ATP = glycyl-tRNA(Gly) + AMP + diphosphate. The chain is Glycine--tRNA ligase alpha subunit from Cupriavidus metallidurans (strain ATCC 43123 / DSM 2839 / NBRC 102507 / CH34) (Ralstonia metallidurans).